Consider the following 304-residue polypeptide: D-alanine--D-alanine ligase (304 aa).

Residues 100–301 enclose the ATP-grasp domain; that stretch reads KLVALQSGIP…FGEFLEDLIK (202 aa). Residue 129-184 participates in ATP binding; it reads ERKLGSPFIVKPCDVGSTIGLSLVRSASEYEVALEEAFRFSDRLLLEEFIDGFEVT. Positions 256, 268, and 270 each coordinate Mg(2+).

It belongs to the D-alanine--D-alanine ligase family. Mg(2+) serves as cofactor. Mn(2+) is required as a cofactor.

It localises to the cytoplasm. The enzyme catalyses 2 D-alanine + ATP = D-alanyl-D-alanine + ADP + phosphate + H(+). The protein operates within cell wall biogenesis; peptidoglycan biosynthesis. Functionally, cell wall formation. The polypeptide is D-alanine--D-alanine ligase (Coprothermobacter proteolyticus (strain ATCC 35245 / DSM 5265 / OCM 4 / BT)).